We begin with the raw amino-acid sequence, 407 residues long: Na(+)-translocating NADH-quinone reductase subunit F (407 aa).

The helical transmembrane segment at 3–23 (IILGVVMFTLIVLALVLVILF) threads the bilayer. A 2Fe-2S ferredoxin-type domain is found at 32–126 (GDITISINGD…DMDIELPEEI (95 aa)). 4 residues coordinate [2Fe-2S] cluster: Cys69, Cys75, Cys78, and Cys110. The FAD-binding FR-type domain maps to 129–269 (VKKWECTVIS…SGPFGEFFAK (141 aa)). Positions 272-389 (DAEMVFIGGG…PMMNAAVIGM (118 aa)) are catalytic.

It belongs to the NqrF family. In terms of assembly, composed of six subunits; NqrA, NqrB, NqrC, NqrD, NqrE and NqrF. [2Fe-2S] cluster serves as cofactor. It depends on FAD as a cofactor.

The protein resides in the cell inner membrane. It catalyses the reaction a ubiquinone + n Na(+)(in) + NADH + H(+) = a ubiquinol + n Na(+)(out) + NAD(+). NQR complex catalyzes the reduction of ubiquinone-1 to ubiquinol by two successive reactions, coupled with the transport of Na(+) ions from the cytoplasm to the periplasm. The first step is catalyzed by NqrF, which accepts electrons from NADH and reduces ubiquinone-1 to ubisemiquinone by a one-electron transfer pathway. This Vibrio vulnificus (strain CMCP6) protein is Na(+)-translocating NADH-quinone reductase subunit F.